A 612-amino-acid chain; its full sequence is Methionine--tRNA ligase (612 aa).

The short motif at 12–22 (PYANGPRHIGH) is the 'HIGH' region element. Zn(2+) is bound by residues cysteine 144, cysteine 147, cysteine 157, and cysteine 160. Residues 350–354 (KFSSS) carry the 'KMSKS' region motif. An ATP-binding site is contributed by serine 353. Positions 580–612 (IQPGTQLSKPKPLFPKLDPELAETGPEWAPVQK) are disordered.

The protein belongs to the class-I aminoacyl-tRNA synthetase family. MetG type 1 subfamily. As to quaternary structure, monomer. Requires Zn(2+) as cofactor.

The protein localises to the cytoplasm. It catalyses the reaction tRNA(Met) + L-methionine + ATP = L-methionyl-tRNA(Met) + AMP + diphosphate. In terms of biological role, is required not only for elongation of protein synthesis but also for the initiation of all mRNA translation through initiator tRNA(fMet) aminoacylation. The polypeptide is Methionine--tRNA ligase (Corynebacterium jeikeium (strain K411)).